The following is a 486-amino-acid chain: MGNNLLSAKATLPVYDLNNLAPRIVHLGFGAFHRAHQGVYADILATEHFSDWGYYEVNLIGGEQQIADLQQQDNLYTVAEMSADVWTARVVGVVKKALHVQIDGLETVLAAMCEPQIAIVSLTITEKGYFHSPATGQLMLDHPMVAADVQNPHQPKTATGVIVEALARRKAAGLPAFTVMSCDNMPENGHVMRDVVTSYAQAVDVKLAQWIEDNVTFPSTMVDRIVPAVTEDTLAKIEQLTGVRDPAGVACEPFRQWVIEDNFVAGRPEWEKAGAELVSDVLPYEEMKLRMLNGSHSFLAYLGYLAGYQHINDCMEDEHYRYAAYGLMLQEQAPTLKVQGVDLQDYANRLIARYSNPALRHRTWQIAMDGSQKLPQRMLDSVRWHLAHDSKFDLLALGVAGWMRYVGGVDEQGNPIEISDPLLPVIQKAVQSSAEGKARVQSLLAIKAIFGDDLPDNSLFTARVTETYLSLLAHGAKATVAKYSVK.

Position 24 to 35 (Ile24 to Ala35) interacts with NAD(+).

Belongs to the mannitol dehydrogenase family. UxuB subfamily.

This is an uncharacterized protein from Escherichia coli (strain K12).